Here is a 458-residue protein sequence, read N- to C-terminus: Transmembrane protein 135 (458 aa).

6 consecutive transmembrane segments (helical) span residues 68 to 88 (ILQS…FFCI), 96 to 116 (FYSW…AILI), 149 to 169 (TLRN…MFFF), 298 to 318 (FQLG…SCFL), 331 to 351 (IVAG…TISM), and 377 to 397 (ADTI…VMEV).

This sequence belongs to the TMEM135 family.

The protein localises to the mitochondrion membrane. Its subcellular location is the peroxisome membrane. Its function is as follows. Involved in mitochondrial metabolism by regulating the balance between mitochondrial fusion and fission. May act as a regulator of mitochondrial fission that promotes DNM1L-dependent fission through activation of DNM1L. May be involved in peroxisome organization. This chain is Transmembrane protein 135, found in Mus musculus (Mouse).